The sequence spans 344 residues: Protein URE2 (344 aa).

The disordered stretch occupies residues 1-49 (MMSTDQHIQQNMNDNSNNSNNSNNNNTNNNNNNQSVNVNVNNTNNNTQT). Positions 9–49 (QQNMNDNSNNSNNSNNNNTNNNNNNQSVNVNVNNTNNNTQT) are enriched in low complexity. A GST N-terminal domain is found at 102–186 (EGFTLFSHRS…YLVSKYLKEN (85 aa)). The GST C-terminal domain maps to 195–344 (NLIEQSQISS…PAVKRALRGD (150 aa)).

Belongs to the GST superfamily. As to quaternary structure, homodimer.

Functionally, plays an important role in the cellular response to the nitrogen source. URE2 gene plays a major part in the repression of GLN1 and GDH2 genes by glutamine, and is required for the inactivation of glutamine synthetase. URE2 gene product may catalytically inactivate GLN3 in response to an increase in the intracellular concentration of glutamine. This is Protein URE2 (URE2) from Candida albicans (strain SC5314 / ATCC MYA-2876) (Yeast).